Consider the following 338-residue polypeptide: Fructose-1,6-bisphosphatase class 1 (338 aa).

Mg(2+) is bound by residues Glu-92, Asp-115, Leu-117, and Asp-118. Substrate contacts are provided by residues 118-121 (DGSS), Asn-211, Tyr-244, 262-264 (YLY), and Lys-274. Position 280 (Glu-280) interacts with Mg(2+).

This sequence belongs to the FBPase class 1 family. In terms of assembly, homotetramer. Mg(2+) is required as a cofactor.

The protein resides in the cytoplasm. It catalyses the reaction beta-D-fructose 1,6-bisphosphate + H2O = beta-D-fructose 6-phosphate + phosphate. Its pathway is carbohydrate biosynthesis; gluconeogenesis. This is Fructose-1,6-bisphosphatase class 1 from Vibrio parahaemolyticus serotype O3:K6 (strain RIMD 2210633).